The sequence spans 970 residues: Disks large 1 tumor suppressor protein (970 aa).

The L27 domain maps to 4–64; it reads KKQEAHRALE…FYELTLLDDS (61 aa). Residues 161–209 are disordered; it reads TENAKEPTVEQQQKQQQAQQRSSRSPQQQNPQQQQGSKSRSGSQTVNGD. A compositionally biased stretch (low complexity) spans 171–204; the sequence is QQQKQQQAQQRSSRSPQQQNPQQQQGSKSRSGSQ. PDZ domains lie at 216–303 and 330–421; these read DIQL…KRKR and EIDL…GKTQ. The segment at 424–477 is disordered; that stretch reads TTSASGGGGGGLSSGQQLSQSQSQLATSQSQSQVHQQQHATPMVNSQSTEPGSR. Low complexity predominate over residues 437 to 462; that stretch reads SGQQLSQSQSQLATSQSQSQVHQQQH. The segment covering 466 to 477 has biased composition (polar residues); that stretch reads MVNSQSTEPGSR. S496 carries the phosphoserine modification. In terms of domain architecture, PDZ 3 spans 506 to 587; sequence TITIQKGPQG…VVTLLAQYRP (82 aa). Residues 620–690 enclose the SH3 domain; that stretch reads KRSLYVRALF…PSKRRWERKM (71 aa). The residue at position 714 (T714) is a Phosphothreonine. The Guanylate kinase-like domain occupies 780–955; it reads TRPVIILGPL…IYSKVKSMIW (176 aa).

Belongs to the MAGUK family. During the cellular blastoderm stage, isoform B, isoform F, isoform H, isoform I and isoform L expression is localized to the cell borders. From stage 11 onwards, expression is found predominantly in the developing nervous system: axon bundles in the ventral cord and the brain. Stage 14 and 15 embryos exhibit expression in the developing body wall muscle. Expression in neuropil regions of the CNS and at NMJs persists through to larval development. Other isoforms show expression in embryonic epithelial cells. In larvae, expression is seen as a belt around salivary glands, imaginal disks and proventriculus. Expressed in adult reproductive tissues. In epithelia, coexpressed with scrib throughout development.

The protein localises to the cytoplasm. It localises to the cell membrane. It is found in the basolateral cell membrane. Its subcellular location is the cytoskeleton. The protein resides in the cell junction. The protein localises to the septate junction. In terms of biological role, during embryonic development, some isoforms are essential for proper neuronal differentiation and organization. Required for cell polarity; maintenance of apicobasal polarity. Plays a critical role at septate junctions in cellular growth control during larval development. The presence of a guanylate kinase domain suggests involvement in cellular adhesion as well as signal transduction to control cellular proliferation. This Drosophila melanogaster (Fruit fly) protein is Disks large 1 tumor suppressor protein (dlg1).